A 423-amino-acid chain; its full sequence is Gamma-glutamyl phosphate reductase (423 aa).

Belongs to the gamma-glutamyl phosphate reductase family.

It is found in the cytoplasm. The catalysed reaction is L-glutamate 5-semialdehyde + phosphate + NADP(+) = L-glutamyl 5-phosphate + NADPH + H(+). It functions in the pathway amino-acid biosynthesis; L-proline biosynthesis; L-glutamate 5-semialdehyde from L-glutamate: step 2/2. In terms of biological role, catalyzes the NADPH-dependent reduction of L-glutamate 5-phosphate into L-glutamate 5-semialdehyde and phosphate. The product spontaneously undergoes cyclization to form 1-pyrroline-5-carboxylate. The polypeptide is Gamma-glutamyl phosphate reductase (Burkholderia orbicola (strain MC0-3)).